The sequence spans 428 residues: 2-isopropylmalate synthase 2 (428 aa).

The region spanning P40–Y302 is the Pyruvate carboxyltransferase domain. Residues D49, H241, H243, and N277 each contribute to the Mn(2+) site.

This sequence belongs to the alpha-IPM synthase/homocitrate synthase family. LeuA type 1 subfamily. Homodimer. Requires Mn(2+) as cofactor.

It localises to the cytoplasm. It catalyses the reaction 3-methyl-2-oxobutanoate + acetyl-CoA + H2O = (2S)-2-isopropylmalate + CoA + H(+). Its pathway is amino-acid biosynthesis; L-leucine biosynthesis; L-leucine from 3-methyl-2-oxobutanoate: step 1/4. Functionally, catalyzes the condensation of the acetyl group of acetyl-CoA with 3-methyl-2-oxobutanoate (2-ketoisovalerate) to form 3-carboxy-3-hydroxy-4-methylpentanoate (2-isopropylmalate). Has high alpha-isopropylmalate synthase activity and low citramalate synthase activity. This is 2-isopropylmalate synthase 2 from Leptospira interrogans serogroup Icterohaemorrhagiae serovar Lai (strain 56601).